Consider the following 1396-residue polypeptide: MFREGSRDDAALVKEGLFDKLEIGIASDVTIRDKWSCGEIKKPETINYRTFKPEKGGLFCEKIFGPTKDWECYCGKYKKIKHKGIVCDRCGVEVTLSKVRRERMAHIELAVPIVHIWFFKTTPSRIGNVLGMTASDLERVIYYEEYVVIDPGNTDLVKKQLLNDAKYREVVEKWGKDAFVAKMGGEAVYDLLKSEDLESLLGELKERLRKTKSQQARMKLAKRLKIVEGFVSSSNRPEWMVLKNIPVVPPDLRPLVPLDGGRFATSDLNDLYRRVINRNNRLKAILRLKTPEVIVRNEKRMLQEAVDALFDNGRHGHPVMGAGNRPLKSLSEMLKGKNGRFRQNLLGKRVDYSGRSVIIVGPELKFNQCGLPKEMALELFEPFIIKRLKDQGSVYTIRSAKKMIQRGAPEVWDVLEEIIKGHPVLLNRAPTLHRLGIQAFEPVLIEGKAIRVHPLVCAAFNADFDGDQMAVHVPLSIEAQLEAKVLMMAPDNIFLPSSGKPVATPSKDMTLGIYYLMADPTYFPEEHGGKTKAFKDEVEVLRALNAGGFILKDEICGSRRDETGRGIHIHEKIKVRIDGQIIETTPGRVFFNTIVPKELGFQNYSMPSKRISELILQCYKKVGLEATVRFLDDLKELGFVQSTKAAISMGLKDVKIPEIKKEILKDAYDKVAVVKKQYEDGIITDGERHSKTISIWTEVSDLLSNALYSEIKKQTNSKHNPLFLMIDSGARGNKSQLKQLGALRGLMAKPNGAIIESPITSNFREGLTVLEYSISSHGARKGLADTALKTADSGYLTRRLVDVAQDVIITERDCGTLNHIEVSTIRQGSEELLPLKDRVYGRTVSENIYQPGDKSNVLAYAGDVLTSAQAEAIDDAGIESVKIRSTLTCESRRGVCAKCYGLNLANGRLIGLGEAVGIIAAQSIGEPGTQLTMRTFHLGGIAATSSTPEIVAECDGILVYLDLRVVVDQEGNNLVLNKMGALHLVQDEGRSLSEYKKLLSTKSIESLATFPVELGAKILVNDGAAVAAGQRIAEVELHNIPIICDKPGFVHYEDLVEGVSTEKVTNKNTGLVELIVKQHRGELHPQIAIYADANMKELVGTYAIPSGAIISVEEGQRIAPGMLLARLPRGAIKTKDITGGLPRVAELVEARKPEDAADIAKIDGVVDFKGIQKNKRILVVRDEITGMEEEHLISLTKHLIVQRGDSVIKGQQLTDGLVVPHEILEICGVRELQKYLVNEVQEVYRLQGVDINDKHVEIIVRQMLQKVRITDPGDTTLLFGEDVDKKEFYEENRRTEEDGGKPAQAVPVLLGITKASLGTESFISAASFQDTTRVLTDAACSSKTDYLLGFKENVIMGHMIPGGTGFDTHKRIKQHLEKEQEDLVFDFDSEFESVAG.

4 residues coordinate Zn(2+): C72, C74, C87, and C90. 3 residues coordinate Mg(2+): D463, D465, and D467. Zn(2+) is bound by residues C814, C889, C896, and C899.

This sequence belongs to the RNA polymerase beta' chain family. The RNAP catalytic core consists of 2 alpha, 1 beta, 1 beta' and 1 omega subunit. When a sigma factor is associated with the core the holoenzyme is formed, which can initiate transcription. Mg(2+) serves as cofactor. The cofactor is Zn(2+).

It carries out the reaction RNA(n) + a ribonucleoside 5'-triphosphate = RNA(n+1) + diphosphate. Its function is as follows. DNA-dependent RNA polymerase catalyzes the transcription of DNA into RNA using the four ribonucleoside triphosphates as substrates. The protein is DNA-directed RNA polymerase subunit beta' of Chlamydia trachomatis serovar A (strain ATCC VR-571B / DSM 19440 / HAR-13).